Reading from the N-terminus, the 365-residue chain is Alanine racemase (365 aa).

The active-site Proton acceptor; specific for D-alanine is the Lys-35. Lys-35 is modified (N6-(pyridoxal phosphate)lysine). Arg-130 is a binding site for substrate. Residue Tyr-256 is the Proton acceptor; specific for L-alanine of the active site. Substrate is bound at residue Met-304.

It belongs to the alanine racemase family. Pyridoxal 5'-phosphate is required as a cofactor.

It carries out the reaction L-alanine = D-alanine. The protein operates within amino-acid biosynthesis; D-alanine biosynthesis; D-alanine from L-alanine: step 1/1. In terms of biological role, catalyzes the interconversion of L-alanine and D-alanine. May also act on other amino acids. The polypeptide is Alanine racemase (alr) (Polaromonas naphthalenivorans (strain CJ2)).